Here is a 591-residue protein sequence, read N- to C-terminus: Probable lysosomal cobalamin transporter (591 aa).

5 consecutive transmembrane segments (helical) span residues 8–28 (LIWVAYAVAVAILFLIASTFV), 39–59 (AAVTIVCIFTTLALLATVLLI), 95–115 (IVYYTLYSLDAVLCLLVIPFT), 144–164 (WTLGFLIFVVAIFLVGFFVPF), and 198–218 (FLITVGTVLFVLYTGAGMALL). Residues 238-266 (TASQLETNRERQRQLEGRNEGREGGLDSR) form a disordered region. The segment covering 244–266 (TNRERQRQLEGRNEGREGGLDSR) has biased composition (basic and acidic residues). 4 helical membrane passes run 315 to 335 (LIGGLILLVFALVIFASMLIT), 378 to 398 (VLFLLLVLFLFSASVVGIATA), 422 to 442 (MATVLLTLITLAINYSVAMVV), and 509 to 529 (FFGIVLFWAQFAFLGVYLIVF).

This sequence belongs to the LIMR family. LMBRD1 subfamily.

Its subcellular location is the lysosome membrane. In terms of biological role, probable lysosomal cobalamin transporter. Required to export cobalamin from lysosomes allowing its conversion to cofactors. In Pyrenophora tritici-repentis (strain Pt-1C-BFP) (Wheat tan spot fungus), this protein is Probable lysosomal cobalamin transporter.